The sequence spans 61 residues: UPF0434 protein Sama_1339 (61 aa).

It belongs to the UPF0434 family.

The chain is UPF0434 protein Sama_1339 from Shewanella amazonensis (strain ATCC BAA-1098 / SB2B).